The following is a 380-amino-acid chain: Ubiquitin-like protein 7 (380 aa).

In terms of domain architecture, Ubiquitin-like spans 18–98 (APKSILRLPE…VLRKSWPEPD (81 aa)). Residues 201-313 (PMPGADSSSR…SSSVQSGTPI (113 aa)) are disordered. S230 is modified (phosphoserine). 2 stretches are compositionally biased toward low complexity: residues 239–255 (SARS…RPAS) and 270–312 (SELA…SGTP). One can recognise a UBA domain in the interval 333–377 (SLQSQWQPQLQQLRDMGIQDDELSLRALQATGGDIQAALELIFAG).

As to quaternary structure, binds ubiquitin. Interacts with MAVS; this interaction enhances TRIM21-dependent 'Lys-27'-linked polyubiquitination of MAVS. In terms of processing, deubiquitinated by OTUD4 which stabilizes UBL7 expression.

Its function is as follows. Interferon-stimulated protein that positively regulates RNA virus-triggered innate immune signaling. Mechanistically, promotes 'Lys-27'-linked polyubiquitination of MAVS through TRIM21 leading to enhanced the IFN signaling pathway. This chain is Ubiquitin-like protein 7 (UBL7), found in Bos taurus (Bovine).